The chain runs to 249 residues: Mannose-binding protein A (249 aa).

A signal peptide spans 1–20 (MLLFSSLPVLLLCVVTASYS). Residues 41–102 (VTNGTPGRDG…KGDPGDTSGV (62 aa)) form a disordered region. Over residues 48–60 (RDGRDGPKGEKGE) the composition is skewed to basic and acidic residues. Position 54 is a 4-hydroxyproline (proline 54). 5-hydroxylysine occurs at positions 55 and 58. O-linked (Gal...) hydroxylysine glycosylation is found at lysine 55 and lysine 58. Proline 61, proline 72, proline 78, and proline 89 each carry 4-hydroxyproline. Residues 64-98 (GFRGSQGPPGKMGPPGNIGETGPLGPKGQKGDPGD) enclose the Collagen-like domain. Lysine 90 and lysine 93 each carry 5-hydroxylysine. 2 O-linked (Gal...) hydroxylysine glycosylation sites follow: lysine 90 and lysine 93. One can recognise a C-type lectin domain in the interval 135–246 (SRKKLYVTNG…CSSSFLAVCE (112 aa)). 2 disulfide bridges follow: cysteine 156–cysteine 245 and cysteine 223–cysteine 237. Aspartate 189, glutamate 193, glutamate 213, asparagine 215, aspartate 216, glutamate 221, aspartate 222, asparagine 233, and aspartate 234 together coordinate Ca(2+). A calcium-dependent carbohydrate binding region spans residues 213–221 (EPNDHGSGE).

Interacts with MASP1 and MASP2. Forms oligomeric complexes of 3, 4, 5 or, predominantly, 6 homotrimers. The homotrimers appear as globular heads that are connected to a central hub by thin stalks. Post-translationally, hydroxylated on lysine and proline residues within the collagen-like domain. O-glycosylated. O-linked glycans on hydroxylysine residues consist of Glc-Gal disaccharides bound to the oxygen atom of post-translationally added hydroxyl groups. Detected in blood serum (at protein level). Expressed in liver. Weakly expressed in lung, testis and brain. Not detected in bone marrow and heart.

The protein localises to the secreted. Its function is as follows. Calcium-dependent lectin. Plays a role in the innate immune response by binding mannose, fucose and N-acetylglucosamine on bacteria, including strains of A.suis, H.parasuis and A.pleuropneumoniae, and activates the lectin complement pathway. According to some authors, it only binds mannose. This is Mannose-binding protein A from Sus scrofa (Pig).